The following is a 214-amino-acid chain: MRTDDLIDALAADAGRGTEPAPPRRLALVAGLGGVAALLLVLGWLQARPDLGQAILGPMFWVKAIYTGLLGLAGYLAVERLSRPGGSGRRGWIIGAVVFGACAVAGIYQAITSPDVQAALKLLHGYSWRSCSPRILVLGLPMLALGLWALRGMAPTRPGLAGFAMGLFSGGVVATLYGLHCPEHTFTFLALWYSLGVLALGLIGGWAGRWLLRW.

Residues Met-1–Arg-25 lie on the Cytoplasmic side of the membrane. A helical membrane pass occupies residues Leu-26–Gln-46. The Periplasmic segment spans residues Ala-47–Gln-53. A helical membrane pass occupies residues Ala-54–Gly-74. Residues Tyr-75 to Arg-90 are Cytoplasmic-facing. A helical membrane pass occupies residues Gly-91–Ile-111. Residues Thr-112–Arg-134 are Periplasmic-facing. A helical transmembrane segment spans residues Ile-135 to Pro-155. The Cytoplasmic segment spans residues Thr-156–Pro-158. Residues Gly-159–Leu-179 form a helical membrane-spanning segment. Residues His-180–Thr-185 are Periplasmic-facing. A helical transmembrane segment spans residues Phe-186–Trp-206. Topologically, residues Ala-207 to Trp-214 are cytoplasmic.

It belongs to the NrsF anti-sigma-F factor family.

It localises to the cell inner membrane. Functionally, an anti-sigma factor for extracytoplasmic function (ECF) sigma factor sigma-F (SigF), which responds to chromate and cadmium. Overexpression leads to loss of response to dichromate. ECF sigma factors are held in an inactive form by a cognate anti-sigma factor. The protein is Anti-sigma-F factor NrsF of Caulobacter vibrioides (strain NA1000 / CB15N) (Caulobacter crescentus).